A 1232-amino-acid polypeptide reads, in one-letter code: Histone-lysine N-methyltransferase MECOM (1232 aa).

Residues Pro22–Ala68 are disordered. Over residues Pro25–Ala34 the composition is skewed to acidic residues. Residues Asp80–Lys192 enclose the SET domain. Glycyl lysine isopeptide (Lys-Gly) (interchain with G-Cter in SUMO2) cross-links involve residues Lys101 and Lys192. The interval Met191–Gly442 is interaction with SUV39H1 and probably MAPK9 and SMAD3. 5 consecutive C2H2-type zinc fingers follow at residues His211–His238, Gln265–His287, Tyr293–His315, Tyr321–His344, and His350–His372. Lys294 participates in a covalent cross-link: Glycyl lysine isopeptide (Lys-Gly) (interchain with G-Cter in SUMO2). Glycyl lysine isopeptide (Lys-Gly) (interchain with G-Cter in SUMO2) cross-links involve residues Lys369 and Lys376. The C2H2-type 6 zinc finger occupies Phe378–His400. The segment at Ile407–Cys429 adopts a C2H2-type 7; atypical zinc-finger fold. Residues Lys432, Lys525, Lys545, Lys549, and Lys557 each participate in a glycyl lysine isopeptide (Lys-Gly) (interchain with G-Cter in SUMO2) cross-link. A disordered region spans residues Ser548–Lys622. Over residues Leu562 to Asp577 the composition is skewed to basic and acidic residues. Positions Ser588–Gly600 are enriched in polar residues. Positions Glu608–Lys622 are enriched in basic and acidic residues. The Nuclear localization signal signature appears at Lys611–Lys624. Lys624 participates in a covalent cross-link: Glycyl lysine isopeptide (Lys-Gly) (interchain with G-Cter in SUMO2). The residue at position 626 (Ser626) is a Phosphoserine. Residues Lys637, Lys665, Lys687, and Lys723 each participate in a glycyl lysine isopeptide (Lys-Gly) (interchain with G-Cter in SUMO2) cross-link. Residues Leu720–Thr823 are disordered. A Phosphoserine modification is found at Ser728. Residues Lys733, Lys734, and Lys737 each participate in a glycyl lysine isopeptide (Lys-Gly) (interchain with G-Cter in SUMO2) cross-link. The residue at position 742 (Ser742) is a Phosphoserine. The CTBP-binding motif 1 motif lies at Pro743–Thr747. Residues Lys751, Lys754, and Lys762 each participate in a glycyl lysine isopeptide (Lys-Gly) (interchain with G-Cter in SUMO2) cross-link. Residues Ser758–Gln773 show a composition bias toward polar residues. The CTBP-binding motif 2 motif lies at Pro774 to Ser778. Residues Lys789, Lys802, and Lys803 each participate in a glycyl lysine isopeptide (Lys-Gly) (interchain with G-Cter in SUMO2) cross-link. Positions Thr791 to Ser805 are enriched in basic and acidic residues. A compositionally biased stretch (polar residues) spans Asn806–Ser816. Glycyl lysine isopeptide (Lys-Gly) (interchain with G-Cter in SUMO2) cross-links involve residues Lys837, Lys846, Lys848, and Lys879. 3 C2H2-type zinc fingers span residues Tyr914–His936, Tyr942–His965, and Phe971–His993. Lys1020 participates in a covalent cross-link: Glycyl lysine isopeptide (Lys-Gly) (interchain with G-Cter in SUMO2). Polar residues predominate over residues Ile1032–Arg1043. A disordered region spans residues Ile1032–Pro1107. Ser1039 and Ser1041 each carry phosphoserine. The span at Asn1044 to Ala1059 shows a compositional bias: basic and acidic residues. Glycyl lysine isopeptide (Lys-Gly) (interchain with G-Cter in SUMO2) cross-links involve residues Lys1055 and Lys1058. A compositionally biased stretch (acidic residues) spans Leu1068–Asp1088. The span at Ile1089–Glu1104 shows a compositional bias: basic and acidic residues. Glycyl lysine isopeptide (Lys-Gly) (interchain with G-Cter in SUMO2) cross-links involve residues Lys1122, Lys1129, Lys1134, Lys1151, Lys1178, and Lys1186.

As to quaternary structure, homooligomer. Interacts with CTBP1. Interacts with SMAD3 (via MH2 domain); the interaction is direct. Interacts with SMAD4; through interaction with SMAD3. Interacts with CREBBP, KAT2B and histone deacetylases. Interacts with MAPK8 and MAPK9; inhibits JNK signaling. Interacts with SUV39H1 (via SET domain); enhances MECOM transcriptional repression activity. In terms of processing, may be acetylated by CREBBP and KAT2B.

The protein resides in the nucleus. It is found in the nucleus speckle. The protein localises to the cytoplasm. It carries out the reaction L-lysyl(9)-[histone H3] + S-adenosyl-L-methionine = N(6)-methyl-L-lysyl(9)-[histone H3] + S-adenosyl-L-homocysteine + H(+). Functions as a transcriptional regulator binding to DNA sequences in the promoter region of target genes and regulating positively or negatively their expression. Oncogene which plays a role in development, cell proliferation and differentiation. May also play a role in apoptosis through regulation of the JNK and TGF-beta signaling. Involved in hematopoiesis. In terms of biological role, displays histone methyltransferase activity and monomethylates 'Lys-9' of histone H3 (H3K9me1) in vitro. Probably catalyzes the monomethylation of free histone H3 in the cytoplasm which is then transported to the nucleus and incorporated into nucleosomes where SUV39H methyltransferases use it as a substrate to catalyze histone H3 'Lys-9' trimethylation. Likely to be one of the primary histone methyltransferases along with PRDM16 that direct cytoplasmic H3K9me1 methylation. The sequence is that of Histone-lysine N-methyltransferase MECOM from Mus musculus (Mouse).